Here is a 330-residue protein sequence, read N- to C-terminus: Aspartate--ammonia ligase (330 aa).

It belongs to the class-II aminoacyl-tRNA synthetase family. AsnA subfamily.

It is found in the cytoplasm. The catalysed reaction is L-aspartate + NH4(+) + ATP = L-asparagine + AMP + diphosphate + H(+). Its pathway is amino-acid biosynthesis; L-asparagine biosynthesis; L-asparagine from L-aspartate (ammonia route): step 1/1. The protein is Aspartate--ammonia ligase of Escherichia coli O17:K52:H18 (strain UMN026 / ExPEC).